A 943-amino-acid chain; its full sequence is Isoleucine--tRNA ligase (943 aa).

A 'HIGH' region motif is present at residues 59–69 (PYANGQIHLGH). An L-isoleucyl-5'-AMP-binding site is contributed by glutamate 577. Residues 618–622 (KMSKS) carry the 'KMSKS' region motif. An ATP-binding site is contributed by lysine 621. Cysteine 906, cysteine 909, cysteine 926, and cysteine 929 together coordinate Zn(2+).

Belongs to the class-I aminoacyl-tRNA synthetase family. IleS type 1 subfamily. In terms of assembly, monomer. Zn(2+) is required as a cofactor.

The protein resides in the cytoplasm. The enzyme catalyses tRNA(Ile) + L-isoleucine + ATP = L-isoleucyl-tRNA(Ile) + AMP + diphosphate. Its function is as follows. Catalyzes the attachment of isoleucine to tRNA(Ile). As IleRS can inadvertently accommodate and process structurally similar amino acids such as valine, to avoid such errors it has two additional distinct tRNA(Ile)-dependent editing activities. One activity is designated as 'pretransfer' editing and involves the hydrolysis of activated Val-AMP. The other activity is designated 'posttransfer' editing and involves deacylation of mischarged Val-tRNA(Ile). This is Isoleucine--tRNA ligase from Xanthomonas axonopodis pv. citri (strain 306).